Here is a 1067-residue protein sequence, read N- to C-terminus: Glycine--tRNA ligase, chloroplastic/mitochondrial 2 (1067 aa).

The transit peptide at 1–50 directs the protein to the chloroplast and mitochondrion; the sequence is MAILHFSLPLIVSFLRPHASPRFFLLPRSLSQSPFLSRRRFHRTSAVSSA. Glu513 is a substrate binding site. ATP is bound by residues 589–596, 619–624, 744–745, and 859–862; these read RNSGINIE, LVVPQN, RL, and GLRR. Position 624-628 (624-628) interacts with substrate; the sequence is NLLNE. 855–859 lines the substrate pocket; that stretch reads NDPFG.

This sequence belongs to the class-II aminoacyl-tRNA synthetase family. As to quaternary structure, homodimer.

It localises to the plastid. Its subcellular location is the chloroplast. The protein localises to the mitochondrion. It catalyses the reaction tRNA(Gly) + glycine + ATP = glycyl-tRNA(Gly) + AMP + diphosphate. Functionally, catalyzes the attachment of glycine to tRNA(Gly). Is also able produce diadenosine tetraphosphate (Ap4A), a universal pleiotropic signaling molecule needed for cell regulation pathways, by direct condensation of 2 ATPs. This chain is Glycine--tRNA ligase, chloroplastic/mitochondrial 2, found in Arabidopsis thaliana (Mouse-ear cress).